We begin with the raw amino-acid sequence, 181 residues long: Histone deacetylase complex subunit SAP30L (181 aa).

The Atypical zinc-finger motif lies at 26 to 74 (CCLIDGGERCPRPAGNASFSKRVQKSISQKKLKLDIDKSVRHLYICDFH). Positions 82-103 (RNKRKRKTSDDGGDSPEHETDV) are disordered. A Nuclear localization signal (NLS) motif is present at residues 83–88 (NKRKRK). The segment at 85-87 (RKR) is important for DNA and phosphoinositide binding.

This sequence belongs to the SAP30 family. In terms of assembly, interacts with components of the histone deacetylase complex sin3a, hdac1 and hdac2. Binds histones and nucleosomes.

It localises to the nucleus. It is found in the nucleolus. Its function is as follows. Functions as a transcription repressor, probably via its interaction with histone deacetylase complexes. Involved in the functional recruitment of the class 1 Sin3-histone deacetylase complex (HDAC) to the nucleolus. Binds DNA, apparently without sequence-specificity, and bends bound double-stranded DNA. Binds phosphoinositol phosphates (phosphoinositol 3-phosphate, phosphoinositol 4-phosphate and phosphoinositol 5-phosphate) via the same basic sequence motif that mediates DNA binding and nuclear import. This is Histone deacetylase complex subunit SAP30L (sap30l) from Xenopus tropicalis (Western clawed frog).